Reading from the N-terminus, the 404-residue chain is Glucose-1-phosphate adenylyltransferase (404 aa).

Residues Y99, G164, 179–180 (EK), and S197 contribute to the alpha-D-glucose 1-phosphate site.

The protein belongs to the bacterial/plant glucose-1-phosphate adenylyltransferase family.

It catalyses the reaction alpha-D-glucose 1-phosphate + ATP + H(+) = ADP-alpha-D-glucose + diphosphate. Its pathway is glycan biosynthesis; glycogen biosynthesis. Its function is as follows. Involved in the biosynthesis of ADP-glucose, a building block, required in the biosynthesis of maltose-1-phosphate (M1P) and in the elongation reactions to produce linear alpha-1,4-glucans. Catalyzes the reaction between ATP and alpha-D-glucose 1-phosphate (G1P) to produce pyrophosphate and ADP-Glc. In Mycolicibacterium vanbaalenii (strain DSM 7251 / JCM 13017 / BCRC 16820 / KCTC 9966 / NRRL B-24157 / PYR-1) (Mycobacterium vanbaalenii), this protein is Glucose-1-phosphate adenylyltransferase.